The sequence spans 469 residues: Cholesterol 7-desaturase nvd (469 aa).

An N-terminal signal peptide occupies residues Met-1–Ala-25. A helical membrane pass occupies residues Asn-58–Leu-78. Residues Ile-132–Val-238 form the Rieske domain. Cys-172, His-174, Cys-192, and His-195 together coordinate [2Fe-2S] cluster.

This sequence belongs to the cholesterol 7-desaturase family. It depends on [2Fe-2S] cluster as a cofactor.

It is found in the membrane. It carries out the reaction cholesterol + NADPH + O2 + H(+) = 7-dehydrocholesterol + NADP(+) + 2 H2O. The catalysed reaction is cholesterol + NADH + O2 + H(+) = 7-dehydrocholesterol + NAD(+) + 2 H2O. Its pathway is steroid hormone biosynthesis; dafachronic acid biosynthesis. Catalyzes the production of 7-dehydrocholesterol (7-DHC or cholesta-5,7-dien-3beta-ol) by inserting a double bond (desaturating) at the C7-C8 single bond of cholesterol. Essential regulator of steroid biosynthesis as this reaction is the first step in the synthesis of the steroid hormone Delta(7)-dafachronic acid. The polypeptide is Cholesterol 7-desaturase nvd (Hemicentrotus pulcherrimus (Sea urchin)).